The primary structure comprises 293 residues: 4-hydroxy-tetrahydrodipicolinate synthase (293 aa).

A pyruvate-binding site is contributed by T50. Y138 acts as the Proton donor/acceptor in catalysis. The active-site Schiff-base intermediate with substrate is K166. A pyruvate-binding site is contributed by V206.

This sequence belongs to the DapA family. Homotetramer; dimer of dimers.

Its subcellular location is the cytoplasm. The catalysed reaction is L-aspartate 4-semialdehyde + pyruvate = (2S,4S)-4-hydroxy-2,3,4,5-tetrahydrodipicolinate + H2O + H(+). It participates in amino-acid biosynthesis; L-lysine biosynthesis via DAP pathway; (S)-tetrahydrodipicolinate from L-aspartate: step 3/4. Catalyzes the condensation of (S)-aspartate-beta-semialdehyde [(S)-ASA] and pyruvate to 4-hydroxy-tetrahydrodipicolinate (HTPA). This Cutibacterium acnes (strain DSM 16379 / KPA171202) (Propionibacterium acnes) protein is 4-hydroxy-tetrahydrodipicolinate synthase.